A 456-amino-acid chain; its full sequence is Putative dihydroorotase (456 aa).

It belongs to the metallo-dependent hydrolases superfamily. DHOase family. Class I DHOase subfamily.

It catalyses the reaction (S)-dihydroorotate + H2O = N-carbamoyl-L-aspartate + H(+). The protein operates within pyrimidine metabolism; UMP biosynthesis via de novo pathway; (S)-dihydroorotate from bicarbonate: step 3/3. Functionally, catalyzes the reversible cyclization of carbamoyl aspartate to dihydroorotate. The sequence is that of Putative dihydroorotase from Rhodopirellula baltica (strain DSM 10527 / NCIMB 13988 / SH1).